The chain runs to 263 residues: Oxygen-evolving enhancer protein 2-1, chloroplastic (263 aa).

A Phosphoserine modification is found at Ser153.

It belongs to the PsbP family. In terms of assembly, interacts with WAK1.

It is found in the plastid. It localises to the chloroplast thylakoid lumen. May be involved in the regulation of photosystem II. This Arabidopsis thaliana (Mouse-ear cress) protein is Oxygen-evolving enhancer protein 2-1, chloroplastic (PSBP1).